Here is a 229-residue protein sequence, read N- to C-terminus: DNA mismatch repair protein MutH (229 aa).

The protein belongs to the MutH family.

It localises to the cytoplasm. Sequence-specific endonuclease that cleaves unmethylated GATC sequences. It is involved in DNA mismatch repair. This chain is DNA mismatch repair protein MutH, found in Shigella boydii serotype 18 (strain CDC 3083-94 / BS512).